The following is a 517-amino-acid chain: ATP synthase subunit alpha (517 aa).

ATP is bound at residue 173–180; that stretch reads GDRQTGKT.

Belongs to the ATPase alpha/beta chains family. F-type ATPases have 2 components, CF(1) - the catalytic core - and CF(0) - the membrane proton channel. CF(1) has five subunits: alpha(3), beta(3), gamma(1), delta(1), epsilon(1). CF(0) has three main subunits: a(1), b(2) and c(9-12). The alpha and beta chains form an alternating ring which encloses part of the gamma chain. CF(1) is attached to CF(0) by a central stalk formed by the gamma and epsilon chains, while a peripheral stalk is formed by the delta and b chains.

The protein localises to the cell inner membrane. The catalysed reaction is ATP + H2O + 4 H(+)(in) = ADP + phosphate + 5 H(+)(out). Functionally, produces ATP from ADP in the presence of a proton gradient across the membrane. The alpha chain is a regulatory subunit. In Legionella pneumophila (strain Lens), this protein is ATP synthase subunit alpha.